The primary structure comprises 324 residues: Protein SRC2 homolog (324 aa).

In terms of domain architecture, C2 spans 1 to 111 (MECRSLDLTI…LDQNKGDEEK (111 aa)). The Cytoplasmic portion of the chain corresponds to 1–279 (MECRSLDLTI…KPQKPKKHGK (279 aa)). Residues 141–281 (GSSSGPHAPV…QKPKKHGKAG (141 aa)) are disordered. Low complexity-rich tracts occupy residues 166-175 (YPPGHGAPSA) and 246-269 (PYGY…QAHG). Over residues 270 to 279 (KPQKPKKHGK) the composition is skewed to basic residues. The chain crosses the membrane as a helical; Signal-anchor span at residues 280–300 (AGAGMGLGLGLGAGLLGGLLV). The Lumenal segment spans residues 301-324 (GEAVSDIADMGDMGDMGDMGGFDF).

Interacts with RBOHF (via N-terminus).

Its subcellular location is the endoplasmic reticulum membrane. It is found in the protein storage vacuole membrane. It localises to the cell membrane. Its function is as follows. May act as an activator of the calcium-dependent activation of RBOHF that mediates reactive oxygen species (ROS) production and may play a role in cold responses. The sequence is that of Protein SRC2 homolog from Arabidopsis thaliana (Mouse-ear cress).